We begin with the raw amino-acid sequence, 210 residues long: Proline-rich protein 20G (210 aa).

Residues 1 to 11 (MEEPRHSKRPR) are compositionally biased toward basic residues. The segment at 1-82 (MEEPRHSKRP…GGSWRAGRGR (82 aa)) is disordered. Gly residues predominate over residues 69–82 (GQRGGGSWRAGRGR).

The protein belongs to the PRR20 family.

This Homo sapiens (Human) protein is Proline-rich protein 20G.